An 82-amino-acid polypeptide reads, in one-letter code: MNVEHEVKLLVEELKRLGQPNSDDKIVVKFGVLFNDDRCANIFEALVGTLKAAKRKKIVHYDSELLLQGVHDHVDIVLLKDE.

It belongs to the costars family.

This chain is Costars family protein v1g158749, found in Nematostella vectensis (Starlet sea anemone).